Here is a 491-residue protein sequence, read N- to C-terminus: UDP-N-acetylmuramate--L-alanine ligase (491 aa).

ATP is bound at residue 126–132 (GTHGKTT).

The protein belongs to the MurCDEF family.

It is found in the cytoplasm. The catalysed reaction is UDP-N-acetyl-alpha-D-muramate + L-alanine + ATP = UDP-N-acetyl-alpha-D-muramoyl-L-alanine + ADP + phosphate + H(+). Its pathway is cell wall biogenesis; peptidoglycan biosynthesis. Functionally, cell wall formation. This is UDP-N-acetylmuramate--L-alanine ligase from Shigella flexneri.